A 632-amino-acid chain; its full sequence is 1,4-alpha-glucan branching enzyme GlgB (632 aa).

D310 serves as the catalytic Nucleophile. Catalysis depends on E363, which acts as the Proton donor.

It belongs to the glycosyl hydrolase 13 family. GlgB subfamily. In terms of assembly, monomer.

The catalysed reaction is Transfers a segment of a (1-&gt;4)-alpha-D-glucan chain to a primary hydroxy group in a similar glucan chain.. Its pathway is glycan biosynthesis; glycogen biosynthesis. Catalyzes the formation of the alpha-1,6-glucosidic linkages in glycogen by scission of a 1,4-alpha-linked oligosaccharide from growing alpha-1,4-glucan chains and the subsequent attachment of the oligosaccharide to the alpha-1,6 position. In Desulfitobacterium hafniense (strain Y51), this protein is 1,4-alpha-glucan branching enzyme GlgB.